The sequence spans 37 residues: Esculentin-2JDa (37 aa).

Cysteine 31 and cysteine 37 are joined by a disulfide.

In terms of tissue distribution, expressed by the skin glands.

Its subcellular location is the secreted. Has antibacterial activity against E.coli and S.aureus strains. The sequence is that of Esculentin-2JDa from Odorrana jingdongensis (Jingdong frog).